Reading from the N-terminus, the 542-residue chain is Phosphoacetylglucosamine mutase (542 aa).

Methionine 1 is modified (N-acetylmethionine). The residue at position 62 (threonine 62) is a Phosphothreonine. The active-site Phosphoserine intermediate is serine 64. Residues serine 64, aspartate 276, aspartate 278, and aspartate 280 each coordinate Mg(2+). Position 64 is a phosphoserine (serine 64). Substrate-binding positions include 370–372 (EAN), 496–500 (RPSGT), and arginine 505.

It belongs to the phosphohexose mutase family. It depends on Mg(2+) as a cofactor. In terms of tissue distribution, found in many tissues except lung. Relatively high expression in pancreas, heart, liver, and placenta, and relatively low expression in brain, skeletal muscle and kidney.

It carries out the reaction N-acetyl-alpha-D-glucosamine 1-phosphate = N-acetyl-D-glucosamine 6-phosphate. The protein operates within nucleotide-sugar biosynthesis; UDP-N-acetyl-alpha-D-glucosamine biosynthesis; N-acetyl-alpha-D-glucosamine 1-phosphate from alpha-D-glucosamine 6-phosphate (route I): step 2/2. Catalyzes the conversion of GlcNAc-6-P into GlcNAc-1-P during the synthesis of uridine diphosphate/UDP-GlcNAc, a sugar nucleotide critical to multiple glycosylation pathways including protein N- and O-glycosylation. The polypeptide is Phosphoacetylglucosamine mutase (Homo sapiens (Human)).